Here is a 571-residue protein sequence, read N- to C-terminus: Urease subunit alpha (571 aa).

Positions 132–571 (GAIDTHIHFI…LPMGQKYFLF (440 aa)) constitute a Urease domain. The Ni(2+) site is built by histidine 137, histidine 139, and lysine 220. Residue lysine 220 is modified to N6-carboxylysine. Histidine 222 provides a ligand contact to substrate. Ni(2+)-binding residues include histidine 249 and histidine 275. Histidine 323 (proton donor) is an active-site residue. Aspartate 363 is a binding site for Ni(2+).

It belongs to the metallo-dependent hydrolases superfamily. Urease alpha subunit family. As to quaternary structure, heterotrimer of UreA (gamma), UreB (beta) and UreC (alpha) subunits. Three heterotrimers associate to form the active enzyme. The cofactor is Ni cation. Carboxylation allows a single lysine to coordinate two nickel ions.

It localises to the cytoplasm. The catalysed reaction is urea + 2 H2O + H(+) = hydrogencarbonate + 2 NH4(+). It functions in the pathway nitrogen metabolism; urea degradation; CO(2) and NH(3) from urea (urease route): step 1/1. This is Urease subunit alpha from Corynebacterium urealyticum (strain ATCC 43042 / DSM 7109).